A 154-amino-acid chain; its full sequence is Large ribosomal subunit protein uL22c (154 aa).

It belongs to the universal ribosomal protein uL22 family. Part of the 50S ribosomal subunit.

It is found in the plastid. The protein resides in the chloroplast. Its function is as follows. This protein binds specifically to 23S rRNA. Functionally, the globular domain of the protein is located near the polypeptide exit tunnel on the outside of the subunit, while an extended beta-hairpin is found that lines the wall of the exit tunnel in the center of the 70S ribosome. This Platanus occidentalis (Sycamore) protein is Large ribosomal subunit protein uL22c (rpl22).